A 115-amino-acid polypeptide reads, in one-letter code: MKVVAAFLLAVLSGKASPTTGDIKDILGSVGAETEDSQIELLLKEVKGKDLAELIAAGREKLASVPSGGGGGVAVASATSGGGGGGGAPAAESKKEEKKEEKEESDDDMGFSLFE.

The disordered stretch occupies residues 62–115 (LASVPSGGGGGVAVASATSGGGGGGGAPAAESKKEEKKEEKEESDDDMGFSLFE). Positions 92–102 (ESKKEEKKEEK) are enriched in basic and acidic residues. A Phosphoserine modification is found at serine 105.

Belongs to the eukaryotic ribosomal protein P1/P2 family. In terms of assembly, P1 and P2 exist as dimers at the large ribosomal subunit. In terms of processing, phosphorylated.

Functionally, plays an important role in the elongation step of protein synthesis. The protein is Large ribosomal subunit protein P2z (RPP2A) of Arabidopsis thaliana (Mouse-ear cress).